The following is a 472-amino-acid chain: Ribulose bisphosphate carboxylase large chain 1 (472 aa).

Substrate-binding residues include Asn-115 and Thr-165. Catalysis depends on Lys-167, which acts as the Proton acceptor. Lys-169 serves as a coordination point for substrate. 3 residues coordinate Mg(2+): Lys-193, Asp-195, and Glu-196. Lys-193 carries the post-translational modification N6-carboxylysine. The active-site Proton acceptor is the His-286. Residues Arg-287, His-319, and Ser-371 each coordinate substrate.

The protein belongs to the RuBisCO large chain family. Type I subfamily. In terms of assembly, heterohexadecamer of 8 large chains and 8 small chains. Mg(2+) is required as a cofactor.

It carries out the reaction 2 (2R)-3-phosphoglycerate + 2 H(+) = D-ribulose 1,5-bisphosphate + CO2 + H2O. It catalyses the reaction D-ribulose 1,5-bisphosphate + O2 = 2-phosphoglycolate + (2R)-3-phosphoglycerate + 2 H(+). Functionally, ruBisCO catalyzes two reactions: the carboxylation of D-ribulose 1,5-bisphosphate, the primary event in carbon dioxide fixation, as well as the oxidative fragmentation of the pentose substrate. Both reactions occur simultaneously and in competition at the same active site. The chain is Ribulose bisphosphate carboxylase large chain 1 from Rhodopseudomonas palustris (strain BisB5).